Here is a 3573-residue protein sequence, read N- to C-terminus: METCDSPTISRQENGQSTSKLCGTTQLDNEVPEKVAGMEPDRENSSTDDNLRTDERKSEILLGFSVENAAATQVTSAKEIPCNECATSFPSLQKYMEHHCPNARLPVLKDDNESEISELEDSDVENLTGEIVYQPDGSAYIIEDSKESGQNAQTGANSKLFSTAMFLDSLTSAGEKNEQSASAPMSFYPQIINTFHIASSLGKPFTADQAFPNTSALAGVGPVLHSFRVYDLRHKRDKDYLTSDGSAKNSCVSKDVPNNVDLSKFDGCVSDGKRKPVLMCFLCKLSFGYIRSFVTHAVHDHRMTLNEEEQKLLSNKYVSAIIQGIGKDKEPLISFLEPKKSTSVYPHFSTTNLIGPDPTFRGLWSAFHVENGDSLQAGFAFLKGSASTAGSAEQPVGITQMPKAEVNLGGLSSLVANAPITSVSLSHSSSESNKLSESKDQENNCERQKETNTLHPNGEFPIKSEPTEPVEEEDEDTYSNELDDDEVLGELADSIGSKDFPLLNQSISPLSSSVLKFIEKGTSSSSATVSDDTDKTKQTAAHRHNSNVTSNYSISGKDFADASASKDSPTALHPNETARGDEDSSVTPHQHSFTPSTPSAGDGSPGSGIECPKCDTVLGSSRSLGGHMTMMHSRNSCKTLKCPKCNWHYKYQQTLEAHMKEKHPEPGGSCVYCKTGQPHPRLARGESYTCGYKPFRCEVCNYSTTTKGNLSIHMQSDKHLNNVQNLQNGNGEQVYGHTAPPSNPALSGCGTPSPSKPKQKPTWRCEVCDYETNVARNLRIHMTSEKHMHNMMLLQQNMKQIQHNLHLGLAPAEAELYQYYLAQNIGLTGMKLENPADPQMMINPFQLDPATAAALAPGLGELSPYISDPALKLFQCAVCNKFTSDSLEALSVHVSSERLLPEEEWRAVIGDIYQCKLCNYNTQLKANFQLHCKTDKHMQKYQLVAHIKEGGKTNEWRLKCIAIGNPVHLKCNACDYYTNSVDKLRLHTTNHRHEAALKLYKHLQKHESTVNPDSCYYYCALCDYSTKVKLNLVQHVRSVKHQQTEGLRKLQLHQQGLAPEEDNLSEIFFVKDCPPNELEVAQLGCRTCDISLTEQGEDTEGSAKSTSVAIGDDKDSSERDNTEAKKSSKDSVNTVVGAQQLLLAKEEDGAAKKSKPPEDNKFCHEQFYQCPYCNYNSRDPNRIQMHVLSQHSMQPVICCPLCQDVLSNKMHLQLHLTHLHSVSPDCVEKLLMTVPVPDVMMPNSMLLPAAASEKSERDTPATITAEGSGKYSGESPVDEKSTPGTDESKPGMEIKSEEQKPPKESAETPDWNKSGSKDIKTTDSMPDQLNEQQKKQQLSVSDRHVYKYRCNHCSLAFKTMQKLQIHSQYHAIRAATMCSLCQRSFRTFQALKKHLEAGHPELNEAELQQLCASLPVNGELWAEGESMGQDDHALEQEIERDYEMEQEGKASPVGSDSSSIPDDMGSEPKRTLPFRKGPNFTMEKFLDPSRPYKCTVCKESFTQKNILLVHYNSVSHLHKLKKVLQEASSPVPQETNSNTDNKPYKCSICNVAYSQSSTLEIHMRSVLHQTKARAAKLEPSGNISSGNSVAGNVNSPSQGILDSMSLPAVNSKEPHLDAKELNKKQASELISAQPTHHPPQSPAQLQMQLQHELQQQAAFFQPQFLNPAFLPHFPMTPEALLQFQQPQFLFPFYIPGTEFSLSPDLGLPGSATFGMPGMAGMTGSLLEDLKQQIQTQHHVGQTQLQILQQQAQQYQSTQPQLQSQKQQQQSSKLMKAEQTSLVSTDCQLIKDMPSYKESEEISEKQEKPKQEFTNESEGLKENKDMKKPKSSEPAIPPPRIASGARGNAAKALLENFGFELVIQYNENRQKVQKKGKTGEGENTDKLECGTCSKLFSNILILKSHQEHVHGQFFPYGALEKFARQYREAYDKLYPISPSSPETPPPPPPPPPPPPPPPPPTPSQPSSAGAGKIQNTTPTPLQAPPPTPPPPPPPPPPPPPPPPPPSAPPQVQLPVSLDLPLFPPIMMQPVQHPALPPQLALQLPPMDTLSADLTQLCQQQLGLDPNFLRHSQFKRPRTRITDDQLKILRAYFDINNSPSEEQIQEMAEKSGLSQKVIKHWFRNTLFKERQRNKDSPYNFSNPPITVLEDIRIDPQPSAVEPYKSDASFSKRSSRTRFTDYQLRVLQDFFDTNAYPKDDEIEQLSTVLNLPTRVIVVWFQNARQKARKSYENQAETKDNEKRELTNERYIRTSNMQYQCKKCSVVFPRIFDLITHQKKQCYKDEDDDAQDESQTEDSMDASDQTVYKNCTVSGQNDASKSLAVTAASSGSGSSTPLIPSPKPEPEKASPKSESTEKPKPNETISKQTDTTSQSSKPVQSASVTPSDPQPSASQPQQQKQSQIIGRPPSTSQTTPVPSSPLPISMTPLQNSLPPQLLQYQCDQCTVAFPTLELWQEHQHMHFLAAQNQFIHSQFLERPMDMPYMIFDPNNPLMTGQLLNSSLAQMPPQTGSSHAAHPATVSGSMKRKLDDKEDNNCSEKEGGNSGEDQHRDKRLRTTITPEQLEILYEKYLLDSNPTRKMLDHIAREVGLKKRVVQVWFQNTRARERKGQFRAVGPAQSHKRCPFCRALFKAKSALESHIRSRHWNEGKQAGYSLPPSPLISTEDGGDSPQKYIFFDYPSLSLAKTELSSENELASTVSTPISKTAEMSPKNLLSPSSFKAESSEDIENLNAPPADSAYDQNKTDFDETSSINTAISDATTGDEGNNEMESTTGSSGDAKPASPPKEPKPLVNDALTKAATTPTNENTDDKFLFSLTSPSIHFSEKDGDHDQSYYITDDPDDNADRSETSSIADPSSPNPFGASNPFKSKNSDRPGHKRFRTQMSNLQLKVLKACFSDYRTPTMQECEMLGNEIGLPKRVVQVWFQNARAKEKKFKINIGKPFMINQTGPDGTKPECSLCGVKYSARLSIRDHIFSKQHITKVRETVGSQLDREKDYLAPTTVRQLMAQQELDRIKKATDVLGLTVQQPGMMDSSSLHGISLPAAYPGLPGLPPVLLPGMNGPSSLPGFPQSSNTLTSPGAGMLGFPTSATSSPALSLSSAPSKPLLQTPPPPPPPPPPPPPPPPPPPPPPSSSLSGQQTEQQSKESEKKNTINKPNKVKKIKEEELEANKPEKHLKKEEKISSALSVLGKVVGEAHVDPTQLQALQNAIAGDPASFIGGQFLPYFIPGFASYFTPQLPGTVQGGYLPPVCGMESLFPYGPAVPQTIAGLSPGALLQQYQQYQQNLQDSLQKQQKQQQEQQQKQVQAKSSKAENDQQQNSSDTSETKEDRSSATESTKEEPQLDSKSADFSDTYIVPFVKYEFICRKCQMMFTDEDAAVNHQKSFCYFGQPLIDPQETVLRVPVSKYQCLACDVAISGNEALSQHLQSSLHKEKTIKQAMRNAKEHVRLLPHSVCSPNPNTTSTSQSAASSNNTYPHLSCFSMKSWPNILFQASARKAASSPSSPPSLSLPSTVTSSLCSTSGVQTSLPTESCSDESDSELSQKLEDLDNSLEVKAKPASGLDGNFNSIRMDMFSV.

Over residues 1-28 (METCDSPTISRQENGQSTSKLCGTTQLD) the composition is skewed to polar residues. Disordered regions lie at residues 1–54 (METC…LRTD), 425–479 (LSHS…DTYS), and 522–606 (TSSS…GSPG). 2 stretches are compositionally biased toward basic and acidic residues: residues 39 to 54 (EPDR…LRTD) and 434 to 452 (KLSE…KETN). Residues 468 to 479 (EPVEEEDEDTYS) show a composition bias toward acidic residues. A compositionally biased stretch (polar residues) spans 585 to 599 (SVTPHQHSFTPSTPS). 3 C2H2-type zinc fingers span residues 609-632 (IECP…TMMH), 640-663 (LKCP…KEKH), and 695-719 (FRCE…SDKH). A C2H2-type 4; degenerate zinc finger spans residues 763-785 (WRCEVCDYETNVARNLRIHMTSE). 3 C2H2-type zinc fingers span residues 913 to 937 (YQCK…TDKH), 969 to 991 (LKCN…TTNH), and 1017 to 1041 (YYCA…SVKH). The tract at residues 1096–1132 (GEDTEGSAKSTSVAIGDDKDSSERDNTEAKKSSKDSV) is disordered. Positions 1111–1129 (GDDKDSSERDNTEAKKSSK) are enriched in basic and acidic residues. C2H2-type zinc fingers lie at residues 1168–1191 (YQCP…LSQH) and 1197–1220 (ICCP…THLH). The interval 1250 to 1340 (AASEKSERDT…EQQKKQQLSV (91 aa)) is disordered. The segment covering 1277-1306 (VDEKSTPGTDESKPGMEIKSEEQKPPKESA) has biased composition (basic and acidic residues). Over residues 1322 to 1340 (TDSMPDQLNEQQKKQQLSV) the composition is skewed to polar residues. 2 consecutive C2H2-type zinc fingers follow at residues 1348-1370 (YRCN…SQYH) and 1376-1399 (TMCS…EAGH). A disordered region spans residues 1442-1476 (YEMEQEGKASPVGSDSSSIPDDMGSEPKRTLPFRK). C2H2-type zinc fingers lie at residues 1492–1518 (YKCT…SHLH) and 1544–1568 (YKCS…SVLH). Disordered regions lie at residues 1577–1596 (LEPS…VNSP) and 1795–1843 (YKES…IASG). The segment covering 1580–1596 (SGNISSGNSVAGNVNSP) has biased composition (low complexity). The segment covering 1795–1830 (YKESEEISEKQEKPKQEFTNESEGLKENKDMKKPKS) has biased composition (basic and acidic residues). A C2H2-type 14 zinc finger spans residues 1886–1909 (LECGTCSKLFSNILILKSHQEHVH). Positions 1933-2013 (YPISPSSPET…PSAPPQVQLP (81 aa)) are disordered. Pro residues-rich tracts occupy residues 1940 to 1962 (PETP…PTPS) and 1980 to 2007 (LQAP…PSAP). DNA-binding regions (homeobox) lie at residues 2072 to 2131 (FKRP…RQRN) and 2169 to 2228 (KRSS…RKSY). The segment at 2255–2279 (YQCKKCSVVFPRIFDLITHQKKQCY) adopts a C2H2-type 15; degenerate zinc-finger fold. Disordered stretches follow at residues 2278 to 2300 (CYKD…DASD) and 2318 to 2426 (SLAV…TPLQ). Acidic residues predominate over residues 2281–2297 (DEDDDAQDESQTEDSMD). Residues 2318 to 2334 (SLAVTAASSGSGSSTPL) are compositionally biased toward low complexity. The span at 2340–2357 (PEPEKASPKSESTEKPKP) shows a compositional bias: basic and acidic residues. Composition is skewed to low complexity over residues 2360-2373 (TISK…QSSK) and 2382-2413 (PSDP…TTPV). Residues 2436–2458 (YQCDQCTVAFPTLELWQEHQHMH) form a C2H2-type 16 zinc finger. Residues 2499–2509 (LAQMPPQTGSS) show a composition bias toward polar residues. Positions 2499–2553 (LAQMPPQTGSSHAAHPATVSGSMKRKLDDKEDNNCSEKEGGNSGEDQHRDKRLRT) are disordered. Over residues 2523–2547 (RKLDDKEDNNCSEKEGGNSGEDQHR) the composition is skewed to basic and acidic residues. A DNA-binding region (homeobox 3) is located at residues 2548–2607 (DKRLRTTITPEQLEILYEKYLLDSNPTRKMLDHIAREVGLKKRVVQVWFQNTRARERKGQ). The C2H2-type 17 zinc finger occupies 2618 to 2641 (KRCPFCRALFKAKSALESHIRSRH). 2 disordered regions span residues 2704–2788 (EMSP…PKPL) and 2820–2875 (FSEK…PGHK). 2 stretches are compositionally biased toward polar residues: residues 2709-2718 (NLLSPSSFKA) and 2746-2773 (TSSI…TGSS). A compositionally biased stretch (basic and acidic residues) spans 2820–2829 (FSEKDGDHDQ). Positions 2874 to 2933 (HKRFRTQMSNLQLKVLKACFSDYRTPTMQECEMLGNEIGLPKRVVQVWFQNARAKEKKFK) form a DNA-binding region, homeobox 4. Residues 2952–2976 (PECSLCGVKYSARLSIRDHIFSKQH) form a C2H2-type 18; degenerate zinc finger. Disordered stretches follow at residues 3060–3174 (PSSL…KHLK) and 3287–3343 (LQKQ…LDSK). A compositionally biased stretch (low complexity) spans 3084-3104 (PTSATSSPALSLSSAPSKPLL). Positions 3105–3129 (QTPPPPPPPPPPPPPPPPPPPPPPS) are enriched in pro residues. Basic and acidic residues predominate over residues 3159–3174 (IKEEELEANKPEKHLK). The stretch at 3271–3316 (ALLQQYQQYQQNLQDSLQKQQKQQQEQQQKQVQAKSSKAENDQQQN) forms a coiled coil. Low complexity predominate over residues 3287–3305 (LQKQQKQQQEQQQKQVQAK). Positions 3321–3343 (SETKEDRSSATESTKEEPQLDSK) are enriched in basic and acidic residues. Residues 3360–3384 (FICRKCQMMFTDEDAAVNHQKSFCY) form a C2H2-type 19; degenerate zinc finger. The C2H2-type 20 zinc-finger motif lies at 3404 to 3428 (YQCLACDVAISGNEALSQHLQSSLH). 2 disordered regions span residues 3449–3468 (HSVC…AASS) and 3518–3543 (TSGV…QKLE). Residues 3453–3468 (SPNPNTTSTSQSAASS) show a composition bias toward low complexity.

The protein belongs to the krueppel C2H2-type zinc-finger protein family.

The protein resides in the nucleus. May play a role in neural and muscle differentiation. May be involved in transcriptional regulation. This Gallus gallus (Chicken) protein is Zinc finger homeobox protein 4 (ZFHX4).